We begin with the raw amino-acid sequence, 77 residues long: MAVFDDVRDVVVEQLSVDPEAVKMESKIIEDLGADSLDVVELVMALEEKFEVEIPDTEAEKLISIADVVNYIEKLGK.

The Carrier domain occupies 1–76; sequence MAVFDDVRDV…DVVNYIEKLG (76 aa). Serine 36 is modified (O-(pantetheine 4'-phosphoryl)serine).

This sequence belongs to the acyl carrier protein (ACP) family. 4'-phosphopantetheine is transferred from CoA to a specific serine of apo-ACP by AcpS. This modification is essential for activity because fatty acids are bound in thioester linkage to the sulfhydryl of the prosthetic group.

It is found in the cytoplasm. It participates in lipid metabolism; fatty acid biosynthesis. Carrier of the growing fatty acid chain in fatty acid biosynthesis. This chain is Acyl carrier protein, found in Campylobacter curvus (strain 525.92).